Reading from the N-terminus, the 318-residue chain is Ribose-phosphate pyrophosphokinase (318 aa).

ATP is bound by residues 43 to 45 (DGE) and 102 to 103 (RQ). Mg(2+) is bound by residues His-136 and Asp-176. Residue Lys-199 is part of the active site. D-ribose 5-phosphate-binding positions include Arg-201, Asp-225, and 229-233 (DTAGT).

This sequence belongs to the ribose-phosphate pyrophosphokinase family. Class I subfamily. In terms of assembly, homohexamer. Mg(2+) is required as a cofactor.

Its subcellular location is the cytoplasm. The enzyme catalyses D-ribose 5-phosphate + ATP = 5-phospho-alpha-D-ribose 1-diphosphate + AMP + H(+). It participates in metabolic intermediate biosynthesis; 5-phospho-alpha-D-ribose 1-diphosphate biosynthesis; 5-phospho-alpha-D-ribose 1-diphosphate from D-ribose 5-phosphate (route I): step 1/1. Functionally, involved in the biosynthesis of the central metabolite phospho-alpha-D-ribosyl-1-pyrophosphate (PRPP) via the transfer of pyrophosphoryl group from ATP to 1-hydroxyl of ribose-5-phosphate (Rib-5-P). The sequence is that of Ribose-phosphate pyrophosphokinase from Listeria ivanovii.